We begin with the raw amino-acid sequence, 246 residues long: Ubiquitin-conjugating enzyme E2 6 (246 aa).

Topologically, residues 1-224 (MATKQAQKRL…LEKQHNDKPN (224 aa)) are cytoplasmic. The region spanning 5-154 (QAQKRLTKEY…FNSTRFKLVF (150 aa)) is the UBC core domain. C87 (glycyl thioester intermediate) is an active-site residue. The helical transmembrane segment at 225–245 (GSSSMFYIGVALFLFLVGLFM) threads the bilayer.

It belongs to the ubiquitin-conjugating enzyme family.

The protein localises to the endoplasmic reticulum membrane. The enzyme catalyses S-ubiquitinyl-[E1 ubiquitin-activating enzyme]-L-cysteine + [E2 ubiquitin-conjugating enzyme]-L-cysteine = [E1 ubiquitin-activating enzyme]-L-cysteine + S-ubiquitinyl-[E2 ubiquitin-conjugating enzyme]-L-cysteine.. It functions in the pathway protein modification; protein ubiquitination. Its function is as follows. Catalyzes the covalent attachment of ubiquitin to other proteins. Functions in degradation of misfolded or regulated proteins localized in the endoplasmic reticulum (ER) lumen or membrane via the ubiquitin-proteasome system. Cognate E2 conjugating enzyme for the DOA10 ubiquitin ligase complex, which is part of the ERAD-C pathway responsible for the rapid degradation of membrane proteins with misfolded cytoplasmic domains. The protein is Ubiquitin-conjugating enzyme E2 6 (UBC6) of Candida glabrata (strain ATCC 2001 / BCRC 20586 / JCM 3761 / NBRC 0622 / NRRL Y-65 / CBS 138) (Yeast).